We begin with the raw amino-acid sequence, 338 residues long: Phytanoyl-CoA dioxygenase, peroxisomal (338 aa).

A peroxisome-targeting transit peptide spans 1 to 30 (MDYTRAGARLQVLLGHLGRPSALQIVAHPV). N6-succinyllysine is present on residues K59 and K108. Residues K120, M157, 175-177 (HQD), and W193 contribute to the 2-oxoglutarate site. Residues H175 and D177 each contribute to the Fe cation site. N6-succinyllysine occurs at positions 231 and 252. H264 contacts Fe cation. 2-oxoglutarate contacts are provided by S266 and R275.

The protein belongs to the PhyH family. In terms of assembly, interacts specifically with FKBP52 and PHYHIP. Fe cation is required as a cofactor. It depends on L-ascorbate as a cofactor. Requires ATP as cofactor. The cofactor is Mg(2+).

It localises to the peroxisome. It catalyses the reaction phytanoyl-CoA + 2-oxoglutarate + O2 = 2-hydroxyphytanoyl-CoA + succinate + CO2. It carries out the reaction 3-methylhexadecanoyl-CoA + 2-oxoglutarate + O2 = 2-hydroxy-3-methylhexadecanoyl-CoA + succinate + CO2. The enzyme catalyses hexadecanoyl-CoA + 2-oxoglutarate + O2 = 2-hydroxyhexadecanoyl-CoA + succinate + CO2. The catalysed reaction is octanoyl-CoA + 2-oxoglutarate + O2 = 2-hydroxyoctanoyl-CoA + succinate + CO2. It catalyses the reaction decanoyl-CoA + 2-oxoglutarate + O2 = 2-hydroxydecanoyl-CoA + succinate + CO2. It carries out the reaction 3-methylbutanoyl-CoA + 2-oxoglutarate + O2 = 2-hydroxy-3-methylbutanoyl-CoA + succinate + CO2. The enzyme catalyses heptadecanoyl-CoA + 2-oxoglutarate + O2 = 2-hydroxyheptadecanoyl-CoA + succinate + CO2. The catalysed reaction is eicosanoyl-CoA + 2-oxoglutarate + O2 = 2-hydroxyeicosanoyl-CoA + succinate + CO2. It catalyses the reaction octadecanoyl-CoA + 2-oxoglutarate + O2 = 2-hydroxyoctadecanoyl-CoA + succinate + CO2. It carries out the reaction dodecanoyl-CoA + 2-oxoglutarate + O2 = 2-hydroxydodecanoyl-CoA + succinate + CO2. The enzyme catalyses tetradecanoyl-CoA + 2-oxoglutarate + O2 = 2-hydroxytetradecanoyl-CoA + succinate + CO2. The catalysed reaction is hexanoyl-CoA + 2-oxoglutarate + O2 = 2-hydroxyhexanoyl-CoA + succinate + CO2. It catalyses the reaction butanoyl-CoA + 2-oxoglutarate + O2 = 2-hydroxybutanoyl-CoA + succinate + CO2. It carries out the reaction 3-methylnonanoyl-CoA + 2-oxoglutarate + O2 = 2-hydroxy-3-methylnonanoyl-CoA + succinate + CO2. The enzyme catalyses 3-methylundecanoyl-CoA + 2-oxoglutarate + O2 = 2-hydroxy-3-methylundecanoyl-CoA + succinate + CO2. The catalysed reaction is 3-methyldodecanoyl-CoA + 2-oxoglutarate + O2 = 2-hydroxy-3-methyldodecanoyl-CoA + succinate + CO2. Its pathway is lipid metabolism; fatty acid metabolism. Its function is as follows. Catalyzes the 2-hydroxylation of racemic phytanoyl-CoA and the isomers of 3-methylhexadecanoyl-CoA. Shows activity also towards a variety of other mono-branched 3-methylacyl-CoA esters (with a chain length of at least seven carbon atoms) and straight-chain acyl-CoA esters (with a chain length longer than four carbon atoms). Does not hydroxylate long and very long straight chain acyl-CoAs or 2-methyl-and 4-methyl-branched acyl-CoAs. The chain is Phytanoyl-CoA dioxygenase, peroxisomal (Phyh) from Rattus norvegicus (Rat).